Here is a 350-residue protein sequence, read N- to C-terminus: Glutamyl-tRNA reductase (350 aa).

Residues 53–56, Ser105, 110–112, and Gln116 contribute to the substrate site; these read TCNR and ETQ. The Nucleophile role is filled by Cys54. Residue 185–190 coordinates NADP(+); it reads GAGETA.

Belongs to the glutamyl-tRNA reductase family. As to quaternary structure, homodimer.

It catalyses the reaction (S)-4-amino-5-oxopentanoate + tRNA(Glu) + NADP(+) = L-glutamyl-tRNA(Glu) + NADPH + H(+). Its pathway is porphyrin-containing compound metabolism; protoporphyrin-IX biosynthesis; 5-aminolevulinate from L-glutamyl-tRNA(Glu): step 1/2. Functionally, catalyzes the NADPH-dependent reduction of glutamyl-tRNA(Glu) to glutamate 1-semialdehyde (GSA). The protein is Glutamyl-tRNA reductase of Deinococcus radiodurans (strain ATCC 13939 / DSM 20539 / JCM 16871 / CCUG 27074 / LMG 4051 / NBRC 15346 / NCIMB 9279 / VKM B-1422 / R1).